We begin with the raw amino-acid sequence, 73 residues long: Gas vesicle protein M2 (73 aa).

The protein belongs to the gas vesicle GvpA family. As to quaternary structure, gvpF to GvpM interact with each other in vitro, and may form multi-subunit complex(es). Might interact with GvpA.

The protein resides in the gas vesicle. Proteins GvpF to GvpM might be involved in nucleating gas vesicle formation. A minor component of the gas vesicle. Gas vesicles are hollow, gas filled proteinaceous nanostructures found in several microbial planktonic microorganisms. They allow positioning of halobacteria at the optimal depth for growth in the poorly aerated, shallow brine pools of their habitat. Its function is as follows. Expression of 2 c-vac DNA fragments containing 2 divergently transcribed regions (gvpE-gvpF-gvpG-gvpH-gvpI-gvpJ-gvpK-gvpL-gvpM and gvpA-gvpC-gvpN-gvpO) allows H.volcanii to produce gas vesicles. The sequence is that of Gas vesicle protein M2 from Halobacterium salinarum (strain ATCC 700922 / JCM 11081 / NRC-1) (Halobacterium halobium).